Consider the following 237-residue polypeptide: Class B acid phosphatase (237 aa).

An N-terminal signal peptide occupies residues 1 to 25 (MRKITLALSAACLLFSLNNAVVARA). The active-site Nucleophile is Asp69. Residues Asp69 and Asp71 each contribute to the Mg(2+) site. Catalysis depends on Asp71, which acts as the Proton donor. Substrate contacts are provided by residues 137–138 (TG) and Lys177. Asp192 lines the Mg(2+) pocket.

This sequence belongs to the class B bacterial acid phosphatase family. In terms of assembly, homotetramer. Mg(2+) serves as cofactor.

It is found in the periplasm. It catalyses the reaction a phosphate monoester + H2O = an alcohol + phosphate. Its function is as follows. Dephosphorylates several organic phosphate monoesters. Also has a phosphotransferase activity catalyzing the transfer of low-energy phosphate groups from organic phosphate monoesters to free hydroxyl groups of various organic compounds. This Enterobacter sp. (strain 638) protein is Class B acid phosphatase.